A 295-amino-acid polypeptide reads, in one-letter code: Methionine aminopeptidase (295 aa).

Substrate is bound at residue histidine 63. Positions 83, 94, and 154 each coordinate a divalent metal cation. Histidine 162 lines the substrate pocket. Glutamate 188 and glutamate 281 together coordinate a divalent metal cation.

This sequence belongs to the peptidase M24A family. Methionine aminopeptidase archaeal type 2 subfamily. In terms of assembly, monomer. Co(2+) serves as cofactor. The cofactor is Zn(2+). It depends on Mn(2+) as a cofactor. Requires Fe(2+) as cofactor.

It catalyses the reaction Release of N-terminal amino acids, preferentially methionine, from peptides and arylamides.. Functionally, removes the N-terminal methionine from nascent proteins. The N-terminal methionine is often cleaved when the second residue in the primary sequence is small and uncharged (Met-Ala-, Cys, Gly, Pro, Ser, Thr, or Val). This Thermococcus kodakarensis (strain ATCC BAA-918 / JCM 12380 / KOD1) (Pyrococcus kodakaraensis (strain KOD1)) protein is Methionine aminopeptidase.